The following is a 1028-amino-acid chain: Contactin-6 (1028 aa).

An N-terminal signal peptide occupies residues 1–19 (MRLLWKLVILLPLINSSAG). 6 consecutive Ig-like C2-type domains span residues 26-117 (PIFT…AKLQ), 122-208 (EDFE…RSVQ), 227-308 (PKIE…RNLA), 318-402 (PEWE…AELR), 408-495 (PDFS…GSLI), and 499-587 (RTVI…ESLS). Disulfide bonds link Cys50–Cys100, Cys144–Cys196, Cys249–Cys297, Cys339–Cys386, Cys431–Cys479, and Cys521–Cys577. 2 N-linked (GlcNAc...) asparagine glycosylation sites follow: Asn65 and Asn193. 3 N-linked (GlcNAc...) asparagine glycosylation sites follow: Asn368, Asn377, and Asn468. Fibronectin type-III domains lie at 600 to 698 (PPED…TKAS), 703 to 800 (APVN…SGED), 805 to 901 (APRG…TKKS), and 902 to 996 (PPSQ…KMSS). N-linked (GlcNAc...) asparagine glycans are attached at residues Asn659, Asn765, Asn860, and Asn865. Residue Tyr882 is modified to Phosphotyrosine. Residues 887–902 (TGPSSPPVNVTTKKSP) show a composition bias toward polar residues. Residues 887 to 908 (TGPSSPPVNVTTKKSPPSQPPA) form a disordered region. N-linked (GlcNAc...) asparagine glycosylation is found at Asn895, Asn931, Asn956, and Asn957. Ser999 carries GPI-anchor amidated serine lipidation. Residues 1000–1028 (RGIQFLEPSTHFLSIVIVIFHCFAIQPLI) constitute a propeptide, removed in mature form.

This sequence belongs to the immunoglobulin superfamily. Contactin family. As to quaternary structure, interacts with PTPRG. In terms of tissue distribution, expressed in nervous system. Highly expressed in cerebellum. Expressed at intermediate level in thalamus, subthalamic nucleus. Weakly expressed in corpus callosum, caudate nucleus and spinal cord.

The protein localises to the cell membrane. Its function is as follows. Contactins mediate cell surface interactions during nervous system development. Participates in oligodendrocytes generation by acting as a ligand of NOTCH1. Its association with NOTCH1 promotes NOTCH1 activation through the released notch intracellular domain (NICD) and subsequent translocation to the nucleus. Involved in motor coordination. This chain is Contactin-6 (CNTN6), found in Homo sapiens (Human).